A 445-amino-acid polypeptide reads, in one-letter code: Adenylosuccinate synthetase (445 aa).

GTP contacts are provided by residues 12-18 (GDEGKGK) and 40-42 (GHT). The Proton acceptor role is filled by D13. Positions 13 and 40 each coordinate Mg(2+). IMP is bound by residues 13–16 (DEGK), 38–41 (NAGH), T128, R142, Q223, T238, and R302. H41 functions as the Proton donor in the catalytic mechanism. Residue 298-304 (TTTGRKR) coordinates substrate. GTP-binding positions include R304, 330–332 (KLD), and 411–413 (SLG).

It belongs to the adenylosuccinate synthetase family. As to quaternary structure, homodimer. Mg(2+) serves as cofactor.

It localises to the cytoplasm. The catalysed reaction is IMP + L-aspartate + GTP = N(6)-(1,2-dicarboxyethyl)-AMP + GDP + phosphate + 2 H(+). The protein operates within purine metabolism; AMP biosynthesis via de novo pathway; AMP from IMP: step 1/2. Its function is as follows. Plays an important role in the de novo pathway of purine nucleotide biosynthesis. Catalyzes the first committed step in the biosynthesis of AMP from IMP. This Cyanothece sp. (strain PCC 7425 / ATCC 29141) protein is Adenylosuccinate synthetase.